We begin with the raw amino-acid sequence, 327 residues long: Ribosomal RNA small subunit methyltransferase H (327 aa).

Residues 37–39 (GGY), Asp55, Phe82, Asp99, and Gln106 each bind S-adenosyl-L-methionine. Residues 303–327 (IATRTDAPAQPVAPETLGLPQLEGF) form a disordered region.

This sequence belongs to the methyltransferase superfamily. RsmH family.

It localises to the cytoplasm. It carries out the reaction cytidine(1402) in 16S rRNA + S-adenosyl-L-methionine = N(4)-methylcytidine(1402) in 16S rRNA + S-adenosyl-L-homocysteine + H(+). In terms of biological role, specifically methylates the N4 position of cytidine in position 1402 (C1402) of 16S rRNA. This is Ribosomal RNA small subunit methyltransferase H from Jannaschia sp. (strain CCS1).